A 363-amino-acid chain; its full sequence is Alanine racemase (363 aa).

Catalysis depends on Lys-39, which acts as the Proton acceptor; specific for D-alanine. At Lys-39 the chain carries N6-(pyridoxal phosphate)lysine. Arg-134 contacts substrate. Tyr-251 functions as the Proton acceptor; specific for L-alanine in the catalytic mechanism. Met-299 lines the substrate pocket.

This sequence belongs to the alanine racemase family. Pyridoxal 5'-phosphate serves as cofactor.

It carries out the reaction L-alanine = D-alanine. The protein operates within amino-acid biosynthesis; D-alanine biosynthesis; D-alanine from L-alanine: step 1/1. Its function is as follows. Catalyzes the interconversion of L-alanine and D-alanine. May also act on other amino acids. The protein is Alanine racemase (alr) of Thermodesulfovibrio yellowstonii (strain ATCC 51303 / DSM 11347 / YP87).